The chain runs to 267 residues: Indole-3-glycerol phosphate synthase (267 aa).

This sequence belongs to the TrpC family.

It carries out the reaction 1-(2-carboxyphenylamino)-1-deoxy-D-ribulose 5-phosphate + H(+) = (1S,2R)-1-C-(indol-3-yl)glycerol 3-phosphate + CO2 + H2O. It participates in amino-acid biosynthesis; L-tryptophan biosynthesis; L-tryptophan from chorismate: step 4/5. The polypeptide is Indole-3-glycerol phosphate synthase (Polynucleobacter asymbioticus (strain DSM 18221 / CIP 109841 / QLW-P1DMWA-1) (Polynucleobacter necessarius subsp. asymbioticus)).